A 725-amino-acid polypeptide reads, in one-letter code: Rab-like protein 6 (725 aa).

Residue methionine 1 is modified to N-acetylmethionine. The small GTPase-like stretch occupies residues 39–279 (GVQYNMKIVI…IFLEMMEARS (241 aa)). Residues 50 to 57 (GDRNTGKT), 100 to 104 (DVVDK), and 177 to 179 (YRD) each bind GTP. 2 disordered regions span residues 281 to 364 (GHAS…PAPA) and 378 to 725 (PAAE…YEEL). Low complexity-rich tracts occupy residues 291 to 325 (QSPS…QLSL) and 343 to 353 (AMPSSVHSSAP). Positions 410–427 (GLDRSFLEDTSVPKDKKV) are enriched in basic and acidic residues. Residues serine 414, serine 436, serine 438, serine 480, serine 482, serine 483, and serine 502 each carry the phosphoserine modification. The segment covering 499-514 (QQCSEPETKWSSTKVS) has biased composition (polar residues). Positions 537–549 (DSERPQEGKDKQV) are enriched in basic and acidic residues. Positions 569 to 578 (DDPDFESDES) are enriched in acidic residues. Phosphoserine occurs at positions 575 and 594. Threonine 597 bears the Phosphothreonine mark. Positions 632 to 649 (MGPKESSDEDRDSKLPSK) are enriched in basic and acidic residues. Phosphoserine occurs at positions 637, 638, and 644. Residues 652-690 (KKKKKKSKEEEEKTTKKKSKHKKSKDKEEGKEDRKKKRK) form an interaction with CDKN2A region. Residues 666 to 675 (TKKKSKHKKS) show a composition bias toward basic residues. Positions 707–725 (LGGGAPGSRHPGGGDYEEL) are enriched in gly residues.

This sequence belongs to the small GTPase superfamily. Rab family.

Its subcellular location is the nucleus. It is found in the cytoplasm. Functionally, may enhance cellular proliferation. May reduce growth inhibitory activity of CDKN2A. The sequence is that of Rab-like protein 6 (Rabl6) from Mus musculus (Mouse).